The chain runs to 1856 residues: Autophagy-related protein 2 (1856 aa).

Disordered regions lie at residues 123–167, 229–283, 309–328, 395–428, 1157–1177, 1614–1647, and 1719–1741; these read NTND…TGNK, LRTL…GNES, KSAASGIPGEVDNKATDKED, TKSRSAQRNEKFPQYTNDNDEIPEDQSESDDASH, LNGTENGSTSESSSQEASSLM, MLGGEGSSVRSPNLGGSDNRRNSNASDELPVEVA, and KLQPHTKGNHEGLTEEEEDEDED. Positions 137–147 are enriched in acidic residues; the sequence is ASEDDDEDDID. Polar residues predominate over residues 250–262; sequence KKQQGSDNDSPTD. The segment covering 270–280 has biased composition (acidic residues); that stretch reads NDNDDDDDDYG. The span at 412-424 shows a compositional bias: acidic residues; that stretch reads DNDEIPEDQSESD. Over residues 1157–1170 the composition is skewed to low complexity; it reads LNGTENGSTSESSS. Polar residues predominate over residues 1621-1639; the sequence is SVRSPNLGGSDNRRNSNAS. The span at 1732–1741 shows a compositional bias: acidic residues; sequence TEEEEDEDED.

This sequence belongs to the ATG2 family.

It localises to the preautophagosomal structure membrane. Its subcellular location is the endoplasmic reticulum membrane. It carries out the reaction a 1,2-diacyl-sn-glycero-3-phosphocholine(in) = a 1,2-diacyl-sn-glycero-3-phosphocholine(out). It catalyses the reaction a 1,2-diacyl-sn-glycero-3-phospho-L-serine(in) = a 1,2-diacyl-sn-glycero-3-phospho-L-serine(out). The catalysed reaction is a 1,2-diacyl-sn-glycero-3-phosphoethanolamine(in) = a 1,2-diacyl-sn-glycero-3-phosphoethanolamine(out). Its function is as follows. Lipid transfer protein required for autophagosome completion and peroxisome degradation. Tethers the edge of the isolation membrane (IM) to the endoplasmic reticulum (ER) and mediates direct lipid transfer from ER to IM for IM expansion. ATG2/SPO72 binds to the ER exit site (ERES), which is the membrane source for autophagosome formation, using basic residues in its N-terminal region (NR) and to the expanding edge of the IM through its C-terminal region. The latter binding is assisted by an ATG18-PtdIns3P interaction. ATG2/SPO72 then extracts phospholipids from the membrane source using its NR and transfers them to ATG9 to the IM through its predicted beta-sheet-rich structure for membrane expansion. The sequence is that of Autophagy-related protein 2 (SPO72) from Candida albicans (strain SC5314 / ATCC MYA-2876) (Yeast).